The primary structure comprises 770 residues: Signal transducer and activator of transcription 3 (770 aa).

N-acetylalanine is present on A2. N6-acetyllysine occurs at positions 49 and 87. The short motif at 150-162 (DVRKRVQDLEQKM) is the Essential for nuclear import element. The SH2 domain occupies 580–670 (WNEGYIMGFI…DATNILVSPL (91 aa)). K601, K615, and K631 each carry allysine; alternate. Residues K601, K615, and K631 each carry the N6-acetyllysine; alternate modification. Y640 carries the post-translational modification Phosphotyrosine; by TYK2. K685 carries the post-translational modification Allysine; alternate. K685 carries the post-translational modification N6-acetyllysine; alternate. Residue Y705 is modified to Phosphotyrosine; by FER and PTK6. K707 carries the post-translational modification N6-acetyllysine. At T714 the chain carries Phosphothreonine. The residue at position 727 (S727) is a Phosphoserine; by DYRK2, NLK, NEK6, IRAK1, RPS6KA5, ZIPK/DAPK3 and PKC/PRKCE.

The protein belongs to the transcription factor STAT family. Forms a homodimer or a heterodimer with a related family member (at least STAT1). Component of a promoter-binding complex composed of STAT3, NFATC3 and NFATC4; complex formation is enhanced by calcineurin. Interacts with IL31RA, NCOA1, PELP1, SIPAR, SOCS7, STATIP1 and TMF1. Interacts with IL23R in presence of IL23. Interacts (via SH2 domain) with NLK. Interacts with ARL2BP; the interaction is enhanced by LIF and JAK1 expression. Interacts with KPNA4 and KPNA5; KPNA4 may be the primary mediator of nuclear import. Interacts with CAV2; the interaction is increased on insulin-induced tyrosine phosphorylation of CAV2 and leads to STAT3 activation. Interacts with ARL2BP; interaction is enhanced with ARL2. Interacts with NEK6. Binds to CDK9 when activated and nuclear. Interacts with BMX. Interacts with ZIPK/DAPK3. Interacts with PIAS3; the interaction occurs on stimulation by IL6, CNTF or OSM and inhibits the DNA binding activity of STAT3. In prostate cancer cells, interacts with PRKCE and promotes DNA binding activity of STAT3. Interacts with STMN3, antagonizing its microtubule-destabilizing activity. Interacts with the 'Lys-129' acetylated form of BIRC5/survivin. Interacts with FER. Interacts (via SH2 domain) with EIF2AK2/PKR (via the kinase catalytic domain). Interacts with FGFR4. Interacts with INPP5F; the interaction is independent of STAT3 Tyr-705 phosphorylation status. Interacts with OCIAD1. Interacts with OCIAD2. Interacts (unphosphorylated or phosphorylated at Ser-727) with PHB1. Interacts and may form heterodimers with NHLH1. Found in a complex with SLC39A6, SLC39A10 and with the 'Ser-727' phosphorylated form of STAT3 throughout mitosis. Interacts (when acetylated) with EP300 (via bromo domain); interaction takes place following STAT3 acetylation by EP300 and promotes enhanceosome assembly. Interacts (when acetylated) with BRD2 (via bromo domain); interaction promotes STAT3 recruitment to chromatin and T-helper Th17 cell differentiation. Interacts with FAM220A/SIPAR; the interaction occurs in both the nucleus and the cytoplasm, is enhanced by IL6 and promotes STAT3 dephosphorylation. Interacts in both unphosphorylated and phosphorylated forms with FAM220A but interacts preferentially in the phosphorylated form in the nucleus. Interacts with PTPN2; the interaction is promoted by FAM220A and leads to STAT3 dephosphorylation which negatively regulates STAT3 transcriptional activator activity. Activated through tyrosine phosphorylation by BMX. Tyrosine phosphorylated in response to IL6, IL11, CNTF, LIF, KITLG/SCF, CSF1, EGF, PDGF, IFN-alpha, LEP and OSM. Activated KIT promotes phosphorylation on tyrosine residues and subsequent translocation to the nucleus. Tyrosine phosphorylated in response to constitutively activated FGFR1, FGFR2, FGFR3 and FGFR4. Phosphorylated on serine upon DNA damage, probably by ATM or ATR. Serine phosphorylation is important for the formation of stable DNA-binding STAT3 homodimers and maximal transcriptional activity. ARL2BP may participate in keeping the phosphorylated state of STAT3 within the nucleus. Tyrosine phosphorylated upon stimulation with EGF. Upon LPS challenge, phosphorylated within the nucleus by IRAK1. Upon UV-A treatment, phosphorylated on Ser-727 by RPS6KA5. Dephosphorylation on tyrosine residues by PTPN2 negatively regulates IL6/interleukin-6 signaling. Phosphorylation at Tyr-705 by PTK6, isoform M2 of PKM (PKM2) or FER leads to an increase of its transcriptional activity. Phosphorylation at Tyr-705 is increased in the presence of calcineurin. Phosphorylation at Tyr-640 by TYK2 negatively regulates transcriptional activity. In terms of processing, acetylated on lysine residues by EP300/p300, promoting its activation. Acetylation at Lys-49 and Lys-87 by EP300/p300 promotes its activation. Acetylation at Lys-87 by EP300/p300 promotes its association with BRD2 and recruitment to chromatin. Deacetylated at Lys-49 and Lys-87 by HDAC1. Acetylation at Lys-685 by EP300/p300 promotes its homodimerization and activation. Deacetylated at Lys-685 by HDAC3. Acetylated on lysine residues by CREBBP. Deacetylation by LOXL3 leads to disrupt STAT3 dimerization and inhibit STAT3 transcription activity. Oxidation of lysine residues to allysine on STAT3 preferentially takes place on lysine residues that are acetylated. Post-translationally, some lysine residues are oxidized to allysine by LOXL3, leading to disrupt STAT3 dimerization and inhibit STAT3 transcription activity. Oxidation of lysine residues to allysine on STAT3 preferentially takes place on lysine residues that are acetylated. (Microbial infection) Phosphorylated on Tyr-705 in the presence of S.typhimurium SarA. As to expression, expressed in ventricular cardiomyocytes (at protein level). Expressed in the lung (at protein level). Expressed in the liver, spleen and kidney. In terms of tissue distribution, expressed in the liver.

It localises to the cytoplasm. The protein resides in the nucleus. Functionally, signal transducer and transcription activator that mediates cellular responses to interleukins, KITLG/SCF, LEP and other growth factors. Once activated, recruits coactivators, such as NCOA1 or MED1, to the promoter region of the target gene. May mediate cellular responses to activated FGFR1, FGFR2, FGFR3 and FGFR4. Upon activation of IL6ST/gp130 signaling by interleukin-6 (IL6), binds to the IL6-responsive elements identified in the promoters of various acute-phase protein genes. Activated by IL31 through IL31RA. Acts as a regulator of inflammatory response by regulating differentiation of naive CD4(+) T-cells into T-helper Th17 or regulatory T-cells (Treg): acetylation promotes its transcription activity and cell differentiation while deacetylation and oxidation of lysine residues by LOXL3 inhibits differentiation. Involved in cell cycle regulation by inducing the expression of key genes for the progression from G1 to S phase, such as CCND1. Mediates the effects of LEP on melanocortin production, body energy homeostasis and lactation. May play an apoptotic role by transctivating BIRC5 expression under LEP activation. Cytoplasmic STAT3 represses macroautophagy by inhibiting EIF2AK2/PKR activity. Plays a crucial role in basal beta cell functions, such as regulation of insulin secretion. Following JAK/STAT signaling activation and as part of a complex with NFATC3 and NFATC4, binds to the alpha-beta E4 promoter region of CRYAB and activates transcription in cardiomyocytes. Plays an important role in host defense in methicillin-resistant S.aureus lung infection by regulating the expression of the antimicrobial lectin REG3G. In Mus musculus (Mouse), this protein is Signal transducer and activator of transcription 3.